The sequence spans 461 residues: Aldehyde dehydrogenase LUC3 (461 aa).

Position 215-220 (215-220) interacts with NAD(+); that stretch reads GSTATG. Active-site residues include glutamate 237 and cysteine 271.

This sequence belongs to the aldehyde dehydrogenase family.

It catalyses the reaction an aldehyde + NAD(+) + H2O = a carboxylate + NADH + 2 H(+). Its pathway is mycotoxin biosynthesis. Functionally, aldehyde dehydrogenase; part of the gene cluster that mediates the biosynthesis of the mycotoxin lucilactaene and the lucilactaene-related compound NG-391 that act as cell cycle inhibitors with potent growth inhibitory activity against malarial parasites, moderate growth inhibitory activity against cancer cells, and no activity against bacteria and fungi. LUC3 is important for lucilactaene biosynthesis and performs the oxidation of the C-20 alcoholic analog prelucilactaene G into a carboxylic derivative that has still to be identified. The pathway begins with the hybrid PKS-NRPS synthetase LUC5 which is responsible for the condensation of one acetyl-coenzyme A (CoA) unit with six malonyl-CoA units and the amide linkage of the arising heptaketide and homoserine, subsequently releasing the first intermediate prelucilactaene B. Both the cytochrome P450 monooxygenase LUC2 and the hydrolase LUC6 function in parallel in modification of prelucilactaene B. LUC6 may catalyze the 2-pyrrolidone ring formation to form prelucilactaene C from prelucilactaene B, followed by C-15 hydroxylation by the same enzyme to give prelucilactaene D, which is then converted to prelucilactaene E by epoxidation, and finally to prelucilactaene F by cyclization. Prelucilactane D, prelucilactaene E, and prelucilactaene F can be converted to dihydrolucilactaene, NG391, and lucilactaene, respectively, via C-20 methyl group hydroxylation by the cytochrome P450 monooxygenase LUC2. However, LUC2, unlike FUS8 in fusarin C biosynthesis, is not enough for the full oxidation of the C-20 methyl group into carboxylic acid, which is a prerequisite for the final methylation step. The aldehyde dehydrogenase LUC3 is involved in the biosynthesis by further oxidation of the C-20 alcoholic analog prelucilactaene G into a carboxylic derivative. This unidentified carboxylic derivative may be converted to demethyllucilactaene. As the last step, the methyltransferase LUC1 methylates the hydroxyl group at C-21 of demethyllucilactaene to generate lucilactaene. This is Aldehyde dehydrogenase LUC3 from Fusarium sp.